The following is a 496-amino-acid chain: MAKRHLLLVTTCLWALSCALLLHASSDGFLRVNLNKKRLDKEDLTAAKLAQQGNRLLKTGSSDSDPVPLVDYLNTQYYGVIGLGSPPQNFTVIFDTGSSNLWVPSAKCYFSIACYLHSRYNSKKSSSYKADGETCKITYGSGAISGFFSKDNVLVGDLVVKNQKFIEATRETSVTFIIGKFDGILGLGYPEISVGKAPPIWQSMQEQELLADDVFSFWLNRDPDASSGGELVFGGMDPKHYKGDHTYVPVSRKGYWQFNMGDLLIDGHSTGFCAKGCAAIVDSGTSLLAGPTAIVAQVNHAIGAEGIISTECKEVVSEYGEMILNLLIAQTDPQKVCSQVGLCMFDGKRSVSNGIESVVDKENLGSDAMCSVCEMAVVWIENQLRENKTKELILNYANQLCERLPSPNGESTVSCHQISKMPNLAFTIANKTFILTPEQYIVKLEQGGQTVCISGFMAFDIPPPRGPLWILGDVFMGAYHTVFDFGKDRIGFAKSA.

Residues M1–A24 form the signal peptide. The propeptide at S25–T59 is activation peptide. Positions Y77–A493 constitute a Peptidase A1 domain. D95 is an active-site residue. 2 disulfides stabilise this stretch: C108-C114 and C273-C277. The active site involves D282. The Saposin B-type domain maps to I307–P407. Disulfide bonds link C312–C401, C337–C373, C343–C370, and C415–C452. A glycan (N-linked (GlcNAc...) asparagine) is linked at N387.

Belongs to the peptidase A1 family.

It localises to the vacuole. Involved in the breakdown of propeptides of storage proteins in protein-storage vacuoles. The polypeptide is Aspartic proteinase (RAP) (Oryza sativa subsp. japonica (Rice)).